Consider the following 158-residue polypeptide: Protein-export protein SecB (158 aa).

Belongs to the SecB family. In terms of assembly, homotetramer, a dimer of dimers. One homotetramer interacts with 1 SecA dimer.

Its subcellular location is the cytoplasm. One of the proteins required for the normal export of preproteins out of the cell cytoplasm. It is a molecular chaperone that binds to a subset of precursor proteins, maintaining them in a translocation-competent state. It also specifically binds to its receptor SecA. This is Protein-export protein SecB from Yersinia pestis (strain Pestoides F).